A 598-amino-acid polypeptide reads, in one-letter code: Elongation factor 4 (598 aa).

A tr-type G domain is found at 5-187 (SHIRNFSIIA…RLVATIPAPT (183 aa)). GTP-binding positions include 17 to 22 (DHGKST) and 134 to 137 (NKMD).

The protein belongs to the TRAFAC class translation factor GTPase superfamily. Classic translation factor GTPase family. LepA subfamily.

It is found in the cell inner membrane. It carries out the reaction GTP + H2O = GDP + phosphate + H(+). Required for accurate and efficient protein synthesis under certain stress conditions. May act as a fidelity factor of the translation reaction, by catalyzing a one-codon backward translocation of tRNAs on improperly translocated ribosomes. Back-translocation proceeds from a post-translocation (POST) complex to a pre-translocation (PRE) complex, thus giving elongation factor G a second chance to translocate the tRNAs correctly. Binds to ribosomes in a GTP-dependent manner. In Pseudomonas syringae pv. syringae (strain B728a), this protein is Elongation factor 4.